A 200-amino-acid polypeptide reads, in one-letter code: Protein GrpE (200 aa).

Acidic residues predominate over residues 1-23 (MEEEIKETSEDKEEENTEAEAVE). The interval 1–39 (MEEEIKETSEDKEEENTEAEAVENNEKSEENAGNVEEDE) is disordered.

It belongs to the GrpE family. In terms of assembly, homodimer.

The protein resides in the cytoplasm. Functionally, participates actively in the response to hyperosmotic and heat shock by preventing the aggregation of stress-denatured proteins, in association with DnaK and GrpE. It is the nucleotide exchange factor for DnaK and may function as a thermosensor. Unfolded proteins bind initially to DnaJ; upon interaction with the DnaJ-bound protein, DnaK hydrolyzes its bound ATP, resulting in the formation of a stable complex. GrpE releases ADP from DnaK; ATP binding to DnaK triggers the release of the substrate protein, thus completing the reaction cycle. Several rounds of ATP-dependent interactions between DnaJ, DnaK and GrpE are required for fully efficient folding. This chain is Protein GrpE, found in Brachyspira hyodysenteriae (strain ATCC 49526 / WA1).